The following is a 99-amino-acid chain: Small ribosomal subunit protein bS20 (99 aa).

This sequence belongs to the bacterial ribosomal protein bS20 family.

Binds directly to 16S ribosomal RNA. The chain is Small ribosomal subunit protein bS20 from Picosynechococcus sp. (strain ATCC 27264 / PCC 7002 / PR-6) (Agmenellum quadruplicatum).